A 351-amino-acid polypeptide reads, in one-letter code: Probable sugar phosphate/phosphate translocator At5g11230 (351 aa).

The next 10 membrane-spanning stretches (helical) occupy residues 15–35 (IVLSYSYVAIWIFLSFTVIVY), 49–69 (FPISLTMIHMSFCSTLAFLII), 89–109 (VVPIGALYALSLWLSNSAYIY), 113–133 (SFIQMLKALMPVAVYSIGVLF), 141–161 (DTMMNMLSISFGVAIAAYGEA), 165–185 (VWGVILQLGAVAFEATRLVLI), 205–225 (VAPCCLAFLFIPWIYVEFPVL), 236–256 (AIFGANSFCAFALNLAVFLLV), 263–283 (TMNVAGVVKDWLLIAFSWSVI), and 286–306 (TVTPINLFGYGIAFLGVAYYN). The EamA domain maps to 38 to 156 (YILDKKMYNW…LSISFGVAIA (119 aa)). A disordered region spans residues 321 to 351 (KKIQQADEESGRLLEEREGDVEGKKNDQSGN).

It belongs to the TPT transporter family. TPT (TC 2.A.7.9) subfamily.

The protein resides in the membrane. In Arabidopsis thaliana (Mouse-ear cress), this protein is Probable sugar phosphate/phosphate translocator At5g11230.